We begin with the raw amino-acid sequence, 157 residues long: Transcription factor HES-2 (157 aa).

In terms of domain architecture, bHLH spans 13–70; the sequence is LRKSLKPLLEKRRRARINESLSQLKGLVLPLLGAETSRYSKLEKADILEMTVRFLREQ. The 34-residue stretch at 86-119 folds into the Orange domain; sequence YLEGYRACLARLARVLPACSVLEPAVSARLLEHL. Residues 124 to 157 form a disordered region; sequence VSGGPPSLTPASASAPAPSPPVPPPSSLGLWRPW. Residues 125–139 are compositionally biased toward low complexity; the sequence is SGGPPSLTPASASAP. The span at 140–149 shows a compositional bias: pro residues; it reads APSPPVPPPS. A WRPW motif motif is present at residues 154 to 157; that stretch reads WRPW.

As to quaternary structure, transcription repression requires formation of a complex with a corepressor protein of the Groucho/TLE family.

The protein resides in the nucleus. Transcriptional repressor of genes that require a bHLH protein for their transcription. This Rattus norvegicus (Rat) protein is Transcription factor HES-2 (Hes2).